We begin with the raw amino-acid sequence, 292 residues long: 4-diphosphocytidyl-2-C-methyl-D-erythritol kinase (292 aa).

K10 is a catalytic residue. 94 to 104 (PVAAGLAGGSS) serves as a coordination point for ATP. Residue D136 is part of the active site.

It belongs to the GHMP kinase family. IspE subfamily.

The catalysed reaction is 4-CDP-2-C-methyl-D-erythritol + ATP = 4-CDP-2-C-methyl-D-erythritol 2-phosphate + ADP + H(+). It participates in isoprenoid biosynthesis; isopentenyl diphosphate biosynthesis via DXP pathway; isopentenyl diphosphate from 1-deoxy-D-xylulose 5-phosphate: step 3/6. Functionally, catalyzes the phosphorylation of the position 2 hydroxy group of 4-diphosphocytidyl-2C-methyl-D-erythritol. This is 4-diphosphocytidyl-2-C-methyl-D-erythritol kinase from Brevibacillus brevis (strain 47 / JCM 6285 / NBRC 100599).